We begin with the raw amino-acid sequence, 246 residues long: Large ribosomal subunit protein uL30-like 1 (246 aa).

A Phosphoserine modification is found at S54.

It belongs to the universal ribosomal protein uL30 family.

This chain is Large ribosomal subunit protein uL30-like 1 (Rpl7l1), found in Mus musculus (Mouse).